A 431-amino-acid polypeptide reads, in one-letter code: Putative F-box/FBD/LRR-repeat protein At4g26350 (431 aa).

Positions 1 to 47 (MDIISQCPDHLLLRILSFIPTKDVIVTSLLSKRWGSLWRWVPKLEYD) constitute an F-box domain. LRR repeat units lie at residues 52–78 (NMRFVKFVYRSLLQNNAPVLESLHLKN), 85–109 (CRTVDIGGWIDIAVSRRVRELEISI), 132–159 (ILTIKHCHLVDVPLAVCLPSLKKLHLRC), 160–185 (IGWAYNATLLRLISGCTNLEELRLAR), and 309–334 (CTQGWWDLLTHMLQGSPKLRFLTLTN). The 51-residue stretch at 348 to 398 (CWKRPSSVPACLLSSLQAFTWSGYKGRQGDKEVVKYVLRNATGLKKRIFIS) folds into the FBD domain.

The polypeptide is Putative F-box/FBD/LRR-repeat protein At4g26350 (Arabidopsis thaliana (Mouse-ear cress)).